The chain runs to 135 residues: Ribonuclease P protein component (135 aa).

It belongs to the RnpA family. As to quaternary structure, consists of a catalytic RNA component (M1 or rnpB) and a protein subunit.

The enzyme catalyses Endonucleolytic cleavage of RNA, removing 5'-extranucleotides from tRNA precursor.. RNaseP catalyzes the removal of the 5'-leader sequence from pre-tRNA to produce the mature 5'-terminus. It can also cleave other RNA substrates such as 4.5S RNA. The protein component plays an auxiliary but essential role in vivo by binding to the 5'-leader sequence and broadening the substrate specificity of the ribozyme. This chain is Ribonuclease P protein component, found in Xylella fastidiosa (strain Temecula1 / ATCC 700964).